The chain runs to 432 residues: Bifunctional protein GlmU (432 aa).

The pyrophosphorylase stretch occupies residues 1-223; sequence MGKKSIIILA…EENFKGVNSK (223 aa). UDP-N-acetyl-alpha-D-glucosamine contacts are provided by residues 9 to 12, K23, Q75, and 82 to 83; these read LAAG and GT. Mg(2+) is bound at residue D103. UDP-N-acetyl-alpha-D-glucosamine is bound by residues G135, E149, N164, and N221. N221 is a binding site for Mg(2+). A linker region spans residues 224 to 244; it reads VELADAEVIHQNRIKKEFMKA. Residues 245-432 are N-acetyltransferase; the sequence is GVIMRLPDTI…FYKHFSSKKK (188 aa). 2 residues coordinate UDP-N-acetyl-alpha-D-glucosamine: R308 and K325. H336 acts as the Proton acceptor in catalysis. The UDP-N-acetyl-alpha-D-glucosamine site is built by Y339 and N350. Acetyl-CoA-binding positions include 359 to 360, S378, A396, and R413; that span reads NY.

It in the N-terminal section; belongs to the N-acetylglucosamine-1-phosphate uridyltransferase family. This sequence in the C-terminal section; belongs to the transferase hexapeptide repeat family. As to quaternary structure, homotrimer. It depends on Mg(2+) as a cofactor.

It localises to the cytoplasm. The catalysed reaction is alpha-D-glucosamine 1-phosphate + acetyl-CoA = N-acetyl-alpha-D-glucosamine 1-phosphate + CoA + H(+). The enzyme catalyses N-acetyl-alpha-D-glucosamine 1-phosphate + UTP + H(+) = UDP-N-acetyl-alpha-D-glucosamine + diphosphate. The protein operates within nucleotide-sugar biosynthesis; UDP-N-acetyl-alpha-D-glucosamine biosynthesis; N-acetyl-alpha-D-glucosamine 1-phosphate from alpha-D-glucosamine 6-phosphate (route II): step 2/2. It participates in nucleotide-sugar biosynthesis; UDP-N-acetyl-alpha-D-glucosamine biosynthesis; UDP-N-acetyl-alpha-D-glucosamine from N-acetyl-alpha-D-glucosamine 1-phosphate: step 1/1. Its pathway is bacterial outer membrane biogenesis; LPS lipid A biosynthesis. Catalyzes the last two sequential reactions in the de novo biosynthetic pathway for UDP-N-acetylglucosamine (UDP-GlcNAc). The C-terminal domain catalyzes the transfer of acetyl group from acetyl coenzyme A to glucosamine-1-phosphate (GlcN-1-P) to produce N-acetylglucosamine-1-phosphate (GlcNAc-1-P), which is converted into UDP-GlcNAc by the transfer of uridine 5-monophosphate (from uridine 5-triphosphate), a reaction catalyzed by the N-terminal domain. This is Bifunctional protein GlmU from Aliarcobacter butzleri (strain RM4018) (Arcobacter butzleri).